Reading from the N-terminus, the 822-residue chain is Glycerol-3-phosphate acyltransferase (822 aa).

Positions 306–311 (CHRSHM) match the HXXXXD motif motif. The tract at residues 803–822 (ASSSAEMEAESQAVEETTQE) is disordered.

It belongs to the GPAT/DAPAT family.

The protein localises to the cell inner membrane. The catalysed reaction is sn-glycerol 3-phosphate + an acyl-CoA = a 1-acyl-sn-glycero-3-phosphate + CoA. The protein operates within phospholipid metabolism; CDP-diacylglycerol biosynthesis; CDP-diacylglycerol from sn-glycerol 3-phosphate: step 1/3. The sequence is that of Glycerol-3-phosphate acyltransferase from Pectobacterium carotovorum subsp. carotovorum (strain PC1).